The sequence spans 567 residues: Urease subunit alpha (567 aa).

The Urease domain occupies 129–567; the sequence is GGVDTHIHWI…LPMAQRYFLF (439 aa). His134, His136, and Lys217 together coordinate Ni(2+). At Lys217 the chain carries N6-carboxylysine. His219 contacts substrate. The Ni(2+) site is built by His246 and His272. The active-site Proton donor is the His320. Asp360 is a Ni(2+) binding site.

It belongs to the metallo-dependent hydrolases superfamily. Urease alpha subunit family. As to quaternary structure, heterotrimer of UreA (gamma), UreB (beta) and UreC (alpha) subunits. Three heterotrimers associate to form the active enzyme. Ni cation serves as cofactor. Carboxylation allows a single lysine to coordinate two nickel ions.

The protein resides in the cytoplasm. The catalysed reaction is urea + 2 H2O + H(+) = hydrogencarbonate + 2 NH4(+). The protein operates within nitrogen metabolism; urea degradation; CO(2) and NH(3) from urea (urease route): step 1/1. This is Urease subunit alpha from Escherichia coli O157:H7.